Consider the following 332-residue polypeptide: Anthranilate phosphoribosyltransferase (332 aa).

Residues glycine 80, 83–84 (GD), threonine 88, 90–93 (NLST), 108–116 (KHGNRSASG), and serine 120 contribute to the 5-phospho-alpha-D-ribose 1-diphosphate site. Position 80 (glycine 80) interacts with anthranilate. Serine 92 contributes to the Mg(2+) binding site. Asparagine 111 is a binding site for anthranilate. Arginine 166 provides a ligand contact to anthranilate. Mg(2+) contacts are provided by aspartate 224 and glutamate 225.

Belongs to the anthranilate phosphoribosyltransferase family. As to quaternary structure, homodimer. Mg(2+) is required as a cofactor.

The catalysed reaction is N-(5-phospho-beta-D-ribosyl)anthranilate + diphosphate = 5-phospho-alpha-D-ribose 1-diphosphate + anthranilate. It participates in amino-acid biosynthesis; L-tryptophan biosynthesis; L-tryptophan from chorismate: step 2/5. Functionally, catalyzes the transfer of the phosphoribosyl group of 5-phosphorylribose-1-pyrophosphate (PRPP) to anthranilate to yield N-(5'-phosphoribosyl)-anthranilate (PRA). The chain is Anthranilate phosphoribosyltransferase from Pyrobaculum calidifontis (strain DSM 21063 / JCM 11548 / VA1).